A 736-amino-acid polypeptide reads, in one-letter code: Catalase-peroxidase (736 aa).

Positions 1–30 (MGGNVMTDDKMNSVTSGANKQETGRDMSNR) are disordered. The span at 12 to 21 (NSVTSGANKQ) shows a compositional bias: polar residues. The segment at residues 101–224 (WHSAGTYRAG…LAAVQMGLIY (124 aa)) is a cross-link (tryptophyl-tyrosyl-methioninium (Trp-Tyr) (with M-250)). Residue His102 is the Proton acceptor of the active site. Positions 224-250 (YVNPEGPNGNPDPIAAAKDIREVFARM) form a cross-link, tryptophyl-tyrosyl-methioninium (Tyr-Met) (with W-101). Residue His265 coordinates heme b. A disordered region spans residues 351-373 (KGGAGAGTIPDAHDPSKRHAPSM).

This sequence belongs to the peroxidase family. Peroxidase/catalase subfamily. As to quaternary structure, homodimer or homotetramer. Heme b serves as cofactor. Post-translationally, formation of the three residue Trp-Tyr-Met cross-link is important for the catalase, but not the peroxidase activity of the enzyme.

The enzyme catalyses H2O2 + AH2 = A + 2 H2O. It carries out the reaction 2 H2O2 = O2 + 2 H2O. Bifunctional enzyme with both catalase and broad-spectrum peroxidase activity. The chain is Catalase-peroxidase from Methanosarcina acetivorans (strain ATCC 35395 / DSM 2834 / JCM 12185 / C2A).